The sequence spans 167 residues: 2-C-methyl-D-erythritol 2,4-cyclodiphosphate synthase (167 aa).

Positions 10 and 12 each coordinate a divalent metal cation. Residues 10–12 (DVH) and 36–37 (HS) contribute to the 4-CDP-2-C-methyl-D-erythritol 2-phosphate site. Residue His44 participates in a divalent metal cation binding. 4-CDP-2-C-methyl-D-erythritol 2-phosphate is bound by residues 58–60 (NIG), 63–67 (FPNTN), 134–137 (TTSE), Phe141, and Arg144.

Belongs to the IspF family. Homotrimer. The cofactor is a divalent metal cation.

It catalyses the reaction 4-CDP-2-C-methyl-D-erythritol 2-phosphate = 2-C-methyl-D-erythritol 2,4-cyclic diphosphate + CMP. It participates in isoprenoid biosynthesis; isopentenyl diphosphate biosynthesis via DXP pathway; isopentenyl diphosphate from 1-deoxy-D-xylulose 5-phosphate: step 4/6. Functionally, involved in the biosynthesis of isopentenyl diphosphate (IPP) and dimethylallyl diphosphate (DMAPP), two major building blocks of isoprenoid compounds. Catalyzes the conversion of 4-diphosphocytidyl-2-C-methyl-D-erythritol 2-phosphate (CDP-ME2P) to 2-C-methyl-D-erythritol 2,4-cyclodiphosphate (ME-CPP) with a corresponding release of cytidine 5-monophosphate (CMP). The sequence is that of 2-C-methyl-D-erythritol 2,4-cyclodiphosphate synthase from Azobacteroides pseudotrichonymphae genomovar. CFP2.